Reading from the N-terminus, the 568-residue chain is Proton-coupled zinc antiporter SLC30A9, mitochondrial (568 aa).

The N-terminal 67 residues, 1-67 (MLPGLAAAAA…IGTLSQVKLY (67 aa)), are a transit peptide targeting the mitochondrion. A run of 5 helical transmembrane segments spans residues 239–259 (VVMV…LAWI), 314–334 (GVGI…MGLL), 342–362 (LLWA…TLLV), 392–412 (VILL…TCMG), and 424–444 (SLGS…LIYT). The short motif at 462-466 (LTELL) is the LXXLL motif element.

It belongs to the cation diffusion facilitator (CDF) transporter (TC 2.A.4) family. SLC30A subfamily. Interacts with GRIP1, ESR1 and AR. In terms of tissue distribution, ubiquitously expressed in fetal and adult tissues and cancer cell lines.

It is found in the mitochondrion membrane. The protein resides in the nucleus. It localises to the endoplasmic reticulum. It carries out the reaction Zn(2+)(in) + 2 H(+)(out) = Zn(2+)(out) + 2 H(+)(in). Functionally, mitochondrial proton-coupled zinc ion antiporter mediating the export of zinc from the mitochondria and involved in zinc homeostasis, zinc mobilization as well as mitochondrial morphology and health. In nucleus, functions as a secondary coactivator for nuclear receptors by cooperating with p160 coactivators subtypes. Plays a role in transcriptional activation of Wnt-responsive genes. This Homo sapiens (Human) protein is Proton-coupled zinc antiporter SLC30A9, mitochondrial.